Here is an 84-residue protein sequence, read N- to C-terminus: Acetylcholine receptor subunit alpha (84 aa).

2 cysteine pairs are disulfide-bonded: Cys-7–Cys-21 and Cys-71–Cys-72. The N-linked (GlcNAc...) asparagine glycan is linked to Asn-20.

Belongs to the ligand-gated ion channel (TC 1.A.9) family. Acetylcholine receptor (TC 1.A.9.1) subfamily. Alpha-1/CHRNA1 sub-subfamily. One of the alpha chains that assemble within the acetylcholine receptor, a pentamer of two alpha chains, a beta, a delta, and a gamma (in immature muscle) or epsilon (in mature muscle) chains. The muscle heteropentamer composed of alpha-1, beta-1, delta, epsilon subunits interacts with the alpha-conotoxin ImII.

Its subcellular location is the postsynaptic cell membrane. The protein localises to the cell membrane. The enzyme catalyses K(+)(in) = K(+)(out). It carries out the reaction Na(+)(in) = Na(+)(out). Functionally, upon acetylcholine binding, the AChR responds by an extensive change in conformation that affects all subunits and leads to opening of an ion-conducting channel across the plasma membrane. In Felis catus (Cat), this protein is Acetylcholine receptor subunit alpha (CHRNA1).